The chain runs to 60 residues: MDLFEMLEDNHSTNNQNDSSDYKKEYRIVLQNYGIEAPDALLEELASYHLDPPPWAPWAK.

This is an uncharacterized protein from Escherichia coli (Bacteriophage T4).